Consider the following 323-residue polypeptide: Delta-aminolevulinic acid dehydratase (323 aa).

C118, C120, and C128 together coordinate Zn(2+). Residue K195 is the Schiff-base intermediate with substrate of the active site. R205 and R217 together coordinate 5-aminolevulinate. E233 provides a ligand contact to Mg(2+). K248 functions as the Schiff-base intermediate with substrate in the catalytic mechanism. Residues S274 and Y313 each coordinate 5-aminolevulinate.

The protein belongs to the ALAD family. In terms of assembly, homooctamer. Requires Zn(2+) as cofactor.

The enzyme catalyses 2 5-aminolevulinate = porphobilinogen + 2 H2O + H(+). It functions in the pathway porphyrin-containing compound metabolism; protoporphyrin-IX biosynthesis; coproporphyrinogen-III from 5-aminolevulinate: step 1/4. In terms of biological role, catalyzes an early step in the biosynthesis of tetrapyrroles. Binds two molecules of 5-aminolevulinate per subunit, each at a distinct site, and catalyzes their condensation to form porphobilinogen. The sequence is that of Delta-aminolevulinic acid dehydratase (hemB) from Staphylococcus aureus.